A 153-amino-acid polypeptide reads, in one-letter code: Ribosome maturation factor RimP (153 aa).

Belongs to the RimP family.

Its subcellular location is the cytoplasm. In terms of biological role, required for maturation of 30S ribosomal subunits. The polypeptide is Ribosome maturation factor RimP (Burkholderia pseudomallei (strain 1710b)).